A 507-amino-acid chain; its full sequence is Heat shock 70 kDa protein 14-B (507 aa).

This sequence belongs to the heat shock protein 70 family. Component of ribosome-associated complex (RAC).

Its subcellular location is the cytoplasm. It is found in the cytosol. In terms of biological role, component of the ribosome-associated complex (RAC), a complex involved in folding or maintaining nascent polypeptides in a folding-competent state. The chain is Heat shock 70 kDa protein 14-B (hspa14-b) from Xenopus laevis (African clawed frog).